A 1173-amino-acid polypeptide reads, in one-letter code: DNA-directed RNA polymerase subunit beta (1173 aa).

Positions 1–23 (MEGSLLVASSTSNNETANTASTD) are disordered. Over residues 8 to 22 (ASSTSNNETANTAST) the composition is skewed to low complexity.

The protein belongs to the RNA polymerase beta chain family. In terms of assembly, the RNAP catalytic core consists of 2 alpha, 1 beta, 1 beta' and 1 omega subunit. When a sigma factor is associated with the core the holoenzyme is formed, which can initiate transcription.

The enzyme catalyses RNA(n) + a ribonucleoside 5'-triphosphate = RNA(n+1) + diphosphate. Its function is as follows. DNA-dependent RNA polymerase catalyzes the transcription of DNA into RNA using the four ribonucleoside triphosphates as substrates. This chain is DNA-directed RNA polymerase subunit beta, found in Paenarthrobacter aurescens (strain TC1).